A 780-amino-acid chain; its full sequence is Chloride channel protein CLC-b (780 aa).

Residues 1 to 28 form a disordered region; it reads MVEEDLNQIGGNSNYNGEGGDPESNTLN. 12 helical membrane passes run 87 to 107, 130 to 150, 177 to 197, 205 to 225, 247 to 267, 277 to 297, 327 to 347, 370 to 390, 452 to 472, 477 to 497, 509 to 529, and 530 to 550; these read TLAC…NLAV, GLMV…VLCV, FGAT…AAGL, LVHI…DNHR, GSAA…LFAL, ALLW…REFI, VTDI…GSLY, VLLS…LPFL, MGSL…TFGI, GLFL…GAAM, AVLG…SLCV, and IFLE…VLLI. CBS domains lie at 594-663 and 708-770; these read AKPP…FLTE and TNTT…AFPL. A helical transmembrane segment spans residues 735 to 755; that stretch reads HLLIVPKIQASGMCPVVGILT.

This sequence belongs to the chloride channel (TC 2.A.49) family. Homodimer. Interacts with PP2A5. As to expression, broadly expressed in the plant.

The protein localises to the membrane. Its function is as follows. Voltage-gated chloride channel. The protein is Chloride channel protein CLC-b (CLC-B) of Arabidopsis thaliana (Mouse-ear cress).